A 571-amino-acid polypeptide reads, in one-letter code: Origin recognition complex subunit 5 (571 aa).

2 disordered regions span residues 90 to 142 (DDEY…YDDD) and 404 to 430 (QIYPPQQVPQQQKQQEKEKEKEKGRQL). Composition is skewed to low complexity over residues 107–133 (NNNNNNNNNNNNNNNNNNNNNNNNNND) and 407–416 (PPQQVPQQQK). Over residues 417–428 (QQEKEKEKEKGR) the composition is skewed to basic and acidic residues.

It belongs to the ORC1 family. ORC is composed of six subunits.

It is found in the nucleus. Functionally, component of the origin recognition complex (ORC) that binds origins of replication. DNA-binding is ATP-dependent, however specific DNA sequences that define origins of replication have not been identified so far. ORC is required to assemble the pre-replication complex necessary to initiate DNA replication. This chain is Origin recognition complex subunit 5 (orcE), found in Dictyostelium discoideum (Social amoeba).